The primary structure comprises 100 residues: uncharacterized protein (100 aa).

Residues 68–88 form a helical membrane-spanning segment; the sequence is VFLFFFTGSSPSFPAALLGLF.

The protein localises to the membrane. This is an uncharacterized protein from Saccharomyces cerevisiae (strain ATCC 204508 / S288c) (Baker's yeast).